The following is a 496-amino-acid chain: Glutamyl-tRNA(Gln) amidotransferase subunit A (496 aa).

Active-site charge relay system residues include lysine 79 and serine 159. Serine 183 acts as the Acyl-ester intermediate in catalysis.

This sequence belongs to the amidase family. GatA subfamily. In terms of assembly, heterotrimer of A, B and C subunits.

It carries out the reaction L-glutamyl-tRNA(Gln) + L-glutamine + ATP + H2O = L-glutaminyl-tRNA(Gln) + L-glutamate + ADP + phosphate + H(+). Functionally, allows the formation of correctly charged Gln-tRNA(Gln) through the transamidation of misacylated Glu-tRNA(Gln) in organisms which lack glutaminyl-tRNA synthetase. The reaction takes place in the presence of glutamine and ATP through an activated gamma-phospho-Glu-tRNA(Gln). In Ruegeria pomeroyi (strain ATCC 700808 / DSM 15171 / DSS-3) (Silicibacter pomeroyi), this protein is Glutamyl-tRNA(Gln) amidotransferase subunit A.